The chain runs to 486 residues: Acetyl-coenzyme A carboxylase carboxyl transferase subunit beta, chloroplastic (486 aa).

The region spanning 224-486 is the CoA carboxyltransferase N-terminal domain; that stretch reads LWVQCENCYG…FQFHGFFPRP (263 aa). Zn(2+) contacts are provided by Cys228, Cys231, Cys247, and Cys250. A C4-type zinc finger spans residues 228 to 250; it reads CENCYGLNYKKFFSSKMNICEQC.

Belongs to the AccD/PCCB family. As to quaternary structure, acetyl-CoA carboxylase is a heterohexamer composed of biotin carboxyl carrier protein, biotin carboxylase and 2 subunits each of ACCase subunit alpha and ACCase plastid-coded subunit beta (accD). Requires Zn(2+) as cofactor.

It localises to the plastid. Its subcellular location is the chloroplast stroma. It catalyses the reaction N(6)-carboxybiotinyl-L-lysyl-[protein] + acetyl-CoA = N(6)-biotinyl-L-lysyl-[protein] + malonyl-CoA. The protein operates within lipid metabolism; malonyl-CoA biosynthesis; malonyl-CoA from acetyl-CoA: step 1/1. Component of the acetyl coenzyme A carboxylase (ACC) complex. Biotin carboxylase (BC) catalyzes the carboxylation of biotin on its carrier protein (BCCP) and then the CO(2) group is transferred by the transcarboxylase to acetyl-CoA to form malonyl-CoA. This is Acetyl-coenzyme A carboxylase carboxyl transferase subunit beta, chloroplastic from Nymphaea alba (White water-lily).